The primary structure comprises 202 residues: Securin (202 aa).

An N-acetylalanine modification is found at Ala2. A disordered region spans residues 35 to 90 (LDGRSQVSTPRFGKTFDAPPALPKATRKALGTVNRATEKSVKTKGPLKQKQPSFSA). The D-box motif lies at 61 to 64 (RKAL). Short sequence motifs (TEK-box) lie at residues 71-73 (TEK) and 94-96 (TEK). Residues 163–173 (PPSPVKMPSPP) carry the SH3-binding motif. Position 165 is a phosphoserine; by CDK1 (Ser165).

The protein belongs to the securin family. In terms of assembly, interacts with RPS10 and DNAJA1. Interacts with the caspase-like ESPL1, and prevents its protease activity probably by covering its active site. Interacts with TP53 and blocks its activity probably by blocking its binding to DNA. Interacts with the Ku 70 kDa subunit of ds-DNA kinase. Interacts with PTTG1IP. Phosphorylated at Ser-165 by CDK1 during mitosis. In terms of processing, phosphorylated in vitro by ds-DNA kinase. Post-translationally, ubiquitinated through 'Lys-11' linkage of ubiquitin moieties by the anaphase promoting complex (APC) at the onset of anaphase, conducting to its degradation. 'Lys-11'-linked ubiquitination is mediated by the E2 ligase UBE2C/UBCH10. Expressed at low level in most tissues, except in adult testis, where it is highly expressed. Overexpressed in many patients suffering from pituitary adenomas, primary epithelial neoplasias, and esophageal cancer.

The protein localises to the cytoplasm. The protein resides in the nucleus. Regulatory protein, which plays a central role in chromosome stability, in the p53/TP53 pathway, and DNA repair. Probably acts by blocking the action of key proteins. During the mitosis, it blocks Separase/ESPL1 function, preventing the proteolysis of the cohesin complex and the subsequent segregation of the chromosomes. At the onset of anaphase, it is ubiquitinated, conducting to its destruction and to the liberation of ESPL1. Its function is however not limited to a blocking activity, since it is required to activate ESPL1. Negatively regulates the transcriptional activity and related apoptosis activity of TP53. The negative regulation of TP53 may explain the strong transforming capability of the protein when it is overexpressed. May also play a role in DNA repair via its interaction with Ku, possibly by connecting DNA damage-response pathways with sister chromatid separation. This Homo sapiens (Human) protein is Securin (PTTG1).